A 921-amino-acid polypeptide reads, in one-letter code: GPI ethanolamine phosphate transferase 1 (921 aa).

The Cytoplasmic portion of the chain corresponds to methionine 1–leucine 9. Residues isoleucine 10–isoleucine 30 traverse the membrane as a helical segment. Residues serine 31–threonine 457 are Lumenal-facing. N-linked (GlcNAc...) asparagine glycosylation is found at asparagine 90, asparagine 138, asparagine 198, asparagine 262, and asparagine 286. The helical transmembrane segment at isoleucine 458–phenylalanine 478 threads the bilayer. Residues isoleucine 479–proline 488 lie on the Cytoplasmic side of the membrane. Residues serine 489–tyrosine 509 traverse the membrane as a helical segment. The Lumenal segment spans residues glutamine 510–phenylalanine 516. Residues tyrosine 517–isoleucine 537 form a helical membrane-spanning segment. At arginine 538 to glutamate 552 the chain is on the cytoplasmic side. Residues serine 553–histidine 573 form a helical membrane-spanning segment. Residues arginine 574 to tryptophan 575 lie on the Lumenal side of the membrane. Residues isoleucine 576 to leucine 596 traverse the membrane as a helical segment. The Cytoplasmic portion of the chain corresponds to phenylalanine 597–asparagine 599. Residues leucine 600–isoleucine 620 form a helical membrane-spanning segment. Residue glutamate 621 is a topological domain, lumenal. Residues asparagine 622 to methionine 642 traverse the membrane as a helical segment. Over arginine 643 to histidine 654 the chain is Cytoplasmic. Residues leucine 655–isoleucine 675 form a helical membrane-spanning segment. At serine 676 to proline 684 the chain is on the lumenal side. A helical membrane pass occupies residues alanine 685–leucine 705. The Cytoplasmic segment spans residues histidine 706 to serine 728. The helical transmembrane segment at phenylalanine 729–valine 749 threads the bilayer. At glutamine 750 to valine 777 the chain is on the lumenal side. A helical transmembrane segment spans residues alanine 778–isoleucine 798. Topologically, residues serine 799–glycine 819 are cytoplasmic. The chain crosses the membrane as a helical span at residues alanine 820–methionine 840. Over asparagine 841 to tyrosine 849 the chain is Lumenal. A helical transmembrane segment spans residues threonine 850–leucine 870. Over lysine 871–aspartate 878 the chain is Cytoplasmic. A helical transmembrane segment spans residues isoleucine 879–leucine 899. At glutamate 900–asparagine 921 the chain is on the lumenal side. Asparagine 909 is a glycosylation site (N-linked (GlcNAc...) asparagine).

It belongs to the PIGG/PIGN/PIGO family. PIGN subfamily.

Its subcellular location is the endoplasmic reticulum membrane. Its pathway is glycolipid biosynthesis; glycosylphosphatidylinositol-anchor biosynthesis. Ethanolamine phosphate transferase involved in glycosylphosphatidylinositol-anchor biosynthesis. Transfers ethanolamine phosphate to the first alpha-1,4-linked mannose of the glycosylphosphatidylinositol precursor of GPI-anchor. The polypeptide is GPI ethanolamine phosphate transferase 1 (MCD4) (Candida glabrata (strain ATCC 2001 / BCRC 20586 / JCM 3761 / NBRC 0622 / NRRL Y-65 / CBS 138) (Yeast)).